The primary structure comprises 144 residues: 3-hydroxyacyl-[acyl-carrier-protein] dehydratase FabZ (144 aa).

The active site involves histidine 48.

The protein belongs to the thioester dehydratase family. FabZ subfamily.

It localises to the cytoplasm. The enzyme catalyses a (3R)-hydroxyacyl-[ACP] = a (2E)-enoyl-[ACP] + H2O. Its function is as follows. Involved in unsaturated fatty acids biosynthesis. Catalyzes the dehydration of short chain beta-hydroxyacyl-ACPs and long chain saturated and unsaturated beta-hydroxyacyl-ACPs. This Bacillus thuringiensis (strain Al Hakam) protein is 3-hydroxyacyl-[acyl-carrier-protein] dehydratase FabZ.